A 379-amino-acid polypeptide reads, in one-letter code: MATAGKVIKCKAAVAWEAGKPLSIEEVEVAPPQAMEVRVKILYTALCHTDVYFWEAKGQTPVFPRILGHEAGGIVESVGEGVTELVPGDHVLPVFTGECKDCAHCKSEESNLCDLLRINVDRGVMIGDGQSRFTINGKPIFHFVGTSTFSEYTVIHVGCLAKINPEAPLDKVCVLSCGLSTGLGATLNVAKPKKGSTVAIFGLGAVGLAAMEGARMAGASRIIGVDLNPAKYEQAKKFGCTDFVNPKDHTKPVQEVLVEMTNGGVDRAVECTGHIDAMIATFECVHDGWGVAVLVGVPHKEAVFKTHPMNFLNEKTLKGTFFGNYKPRTDLPEVVEMYMRKELDLEKFITHSVPFSQINTAFDLMLKGEGLRCITRTDQ.

Positions 47, 49, 69, 99, 102, 105, 113, and 177 each coordinate Zn(2+). An alcohol is bound by residues T49 and H69. An NAD(+)-binding site is contributed by T49. NAD(+) is bound by residues 202–207, D226, K231, T272, V295, 295–297, F322, and R372; these read GLGAVG and VGV.

This sequence belongs to the zinc-containing alcohol dehydrogenase family. As to quaternary structure, homodimer. Requires Zn(2+) as cofactor.

The protein resides in the cytoplasm. It carries out the reaction a primary alcohol + NAD(+) = an aldehyde + NADH + H(+). It catalyses the reaction a secondary alcohol + NAD(+) = a ketone + NADH + H(+). In Hordeum vulgare (Barley), this protein is Alcohol dehydrogenase 3 (ADH3).